The chain runs to 493 residues: Endolysin A (493 aa).

Belongs to the L5likevirus endolysin A protein family.

In terms of biological role, endolysin that degrades host peptidoglycans and participates with the holin protein in the sequential events which lead to the programmed host cell lysis releasing the mature viral particles. Once the holin has permeabilized the host cell membrane, the endolysin can reach the periplasm and break down the peptidoglycan layer. This chain is Endolysin A (10), found in Mycobacterium phage D29 (Mycobacteriophage D29).